We begin with the raw amino-acid sequence, 737 residues long: Ribosome-releasing factor 2, mitochondrial (737 aa).

The N-terminal 29 residues, 1–29, are a transit peptide targeting the mitochondrion; that stretch reads MLKYALHSGGMPRNRLLRQLSAYIFRRSY. One can recognise a tr-type G domain in the interval 31-310; that stretch reads SNIRNIGILA…AVNTYLPAPE (280 aa). GTP contacts are provided by residues 40-47, 104-108, and 158-161; these read AHIDAGKT, DTPGH, and NKMD.

Belongs to the TRAFAC class translation factor GTPase superfamily. Classic translation factor GTPase family. EF-G/EF-2 subfamily.

Its subcellular location is the mitochondrion. In terms of biological role, mitochondrial GTPase that mediates the disassembly of ribosomes from messenger RNA at the termination of mitochondrial protein biosynthesis. Not involved in the GTP-dependent ribosomal translocation step during translation elongation. This Drosophila persimilis (Fruit fly) protein is Ribosome-releasing factor 2, mitochondrial.